Consider the following 953-residue polypeptide: Coatomer subunit beta (953 aa).

T2 is modified (N-acetylthreonine). HEAT repeat units lie at residues 96–131 (HEMI…KEAE), 132–168 (LLEP…NFEH), 240–276 (SERA…SAPT), 277–314 (AIKA…HPAH), 316–353 (RVLQ…SRNV), and 396–433 (DMAA…RFDN). N6-acetyllysine is present on K494.

As to quaternary structure, oligomeric complex that consists of at least the alpha, beta, beta', gamma, delta, epsilon and zeta subunits. Interacts with CAPN8. Interacts with SCYL1 and PRKCE. Interacts with COPG1. Interacts with ARF1 (myristoylated); this interaction is required for binding of COPB1 to Golgi membranes. Interacts (via trunk domain) with ARF1 (via switch I region); the interaction is direct. Interacts with KCNK2 (via N-terminus); this interaction increases the channel-mediated whole cell currents and promotes plasma membrane expression of KCNK2. Interacts with STX17. Interacts with TMEM115. Interacts with TMEM41B. Post-translationally, proteolytically cleaved between Ser-528 and Ser-529 by CAPN8. Predominantly expressed in the upper one-third of the oxyntic mucosa and in most regions of the pyloric mucosa. Ubiquitously expressed including platelet, liver, heart, spleen, lung and kidney.

It is found in the cytoplasm. The protein localises to the golgi apparatus membrane. It localises to the cytoplasmic vesicle. The protein resides in the COPI-coated vesicle membrane. Its subcellular location is the cell membrane. It is found in the endoplasmic reticulum-Golgi intermediate compartment. The coatomer is a cytosolic protein complex that binds to dilysine motifs and reversibly associates with Golgi non-clathrin-coated vesicles, which further mediate biosynthetic protein transport from the ER, via the Golgi up to the trans Golgi network. Coatomer complex is required for budding from Golgi membranes, and is essential for the retrograde Golgi-to-ER transport of dilysine-tagged proteins. In mammals, the coatomer can only be recruited by membranes associated to ADP-ribosylation factors (ARFs), which are small GTP-binding proteins; the complex also influences the Golgi structural integrity, as well as the processing, activity, and endocytic recycling of LDL receptors. Involved in the Golgi disassembly and reassembly processes during cell cycle. Involved in autophagy by playing a role in early endosome function. Plays a role in organellar compartmentalization of secretory compartments including endoplasmic reticulum (ER)-Golgi intermediate compartment (ERGIC), Golgi, trans-Golgi network (TGN) and recycling endosomes, and in biosynthetic transport of CAV1. Plays a functional role in facilitating the transport of kappa-type opioid receptor mRNAs into axons and enhances translation of these proteins in cortical neurons. Required for limiting lipid storage in lipid droplets. Involved in lipid homeostasis by regulating the presence of perilipin family members PLIN2 and PLIN3 at the lipid droplet surface and promoting the association of adipocyte triglyceride lipase (PNPLA2) with the lipid droplet surface to mediate lipolysis. This Mus musculus (Mouse) protein is Coatomer subunit beta (Copb1).